The primary structure comprises 1154 residues: FERM domain-containing protein A (1154 aa).

Disordered stretches follow at residues 122–149 (NNNS…SSSS), 432–468 (NLSS…NHHN), 715–734 (NKNN…SSSS), 771–794 (SNSN…TSSS), and 961–980 (TNGS…NNGI). FERM domains are found at residues 218 to 547 (PLHQ…PSIQ) and 666 to 1103 (REIV…QTKL). Residues 437 to 447 (GGSGNGSGSGN) show a composition bias toward gly residues. Residues 448–463 (GSSSSSSNSSSGNNNN) are compositionally biased toward low complexity.

Its function is as follows. Key regulator of adhesion dynamics, it acts as an anti-adhesive. Plays a critical role in the regulation of cell-cell adhesion, multi-cellular development and, in particular, the formation of the organising center known as the tip. Required for turnover of paxillin-adhesion sites during cell migration. Plays a major role in normal cell shape, cell-substrate adhesion and actin cytoskeleton organization. The polypeptide is FERM domain-containing protein A (frmA) (Dictyostelium discoideum (Social amoeba)).